Consider the following 813-residue polypeptide: UPF0508 protein KLLA0A06237g (813 aa).

The interval 478 to 537 (KKDKSKSQKNSTDSLAKLSDTKSIHPPESAMSSHASTPSSTSKSSKSSKSSSTLSPSTCK) is disordered. Residues 506-537 (SAMSSHASTPSSTSKSSKSSKSSSTLSPSTCK) show a composition bias toward low complexity.

The protein belongs to the UPF0508 family.

This is UPF0508 protein KLLA0A06237g from Kluyveromyces lactis (strain ATCC 8585 / CBS 2359 / DSM 70799 / NBRC 1267 / NRRL Y-1140 / WM37) (Yeast).